Reading from the N-terminus, the 89-residue chain is Long neurotoxin homolog NTL2 (89 aa).

Positions methionine 1–threonine 21 are cleaved as a signal peptide. 5 disulfide bridges follow: cysteine 24-cysteine 45, cysteine 27-cysteine 32, cysteine 38-cysteine 66, cysteine 70-cysteine 81, and cysteine 82-cysteine 87. A Cell attachment site motif is present at residues arginine 54–aspartate 56.

This sequence belongs to the three-finger toxin family. Ancestral subfamily. Orphan group V sub-subfamily. In terms of tissue distribution, expressed by the venom gland.

The protein localises to the secreted. Exhibits M2 muscarinic acetylcholine receptor (CHRM2)-blocking activity, but has a weak binding activity toward nicotinic AChR. Moreover, it inhibits collagen-induced platelet aggregation. This chain is Long neurotoxin homolog NTL2, found in Bungarus multicinctus (Many-banded krait).